A 361-amino-acid chain; its full sequence is tRNA/tmRNA (uracil-C(5))-methyltransferase (361 aa).

Q183, Y211, N216, E232, and D294 together coordinate S-adenosyl-L-methionine. The active-site Nucleophile is C319. Residue E353 is the Proton acceptor of the active site.

The protein belongs to the class I-like SAM-binding methyltransferase superfamily. RNA M5U methyltransferase family. TrmA subfamily.

The enzyme catalyses uridine(54) in tRNA + S-adenosyl-L-methionine = 5-methyluridine(54) in tRNA + S-adenosyl-L-homocysteine + H(+). The catalysed reaction is uridine(341) in tmRNA + S-adenosyl-L-methionine = 5-methyluridine(341) in tmRNA + S-adenosyl-L-homocysteine + H(+). Its function is as follows. Dual-specificity methyltransferase that catalyzes the formation of 5-methyluridine at position 54 (m5U54) in all tRNAs, and that of position 341 (m5U341) in tmRNA (transfer-mRNA). This chain is tRNA/tmRNA (uracil-C(5))-methyltransferase, found in Acinetobacter baumannii (strain AB307-0294).